A 691-amino-acid chain; its full sequence is ERI1 exoribonuclease 2 (691 aa).

In terms of domain architecture, Exonuclease spans 37–226 (LIVIDFESTC…DDSRNTALLA (190 aa)). Mg(2+) is bound by residues aspartate 41, glutamate 43, and aspartate 156. The active-site Proton acceptor is the glutamate 43. Glutamate 43 contacts AMP. The active-site Proton acceptor is the histidine 213. Histidine 213 contributes to the AMP binding site. Residue aspartate 218 coordinates Mg(2+). Positions 597, 599, 622, and 634 each coordinate Zn(2+). The GRF-type zinc-finger motif lies at 597–643 (CKCGRRSKRLVVSNNGPNHGKVFYCCPIGKYQENRKCCGYFKWEQTL).

It belongs to the ERI2 family. The cofactor is Mg(2+).

This chain is ERI1 exoribonuclease 2 (ERI2), found in Homo sapiens (Human).